We begin with the raw amino-acid sequence, 275 residues long: Lectin DB58 (275 aa).

The first 22 residues, 1–22 (MASSTVSVVLSLFLLLLTQAYS), serve as a signal peptide directing secretion. 2 N-linked (GlcNAc...) asparagine glycosylation sites follow: Asn34 and Asn101.

It belongs to the leguminous lectin family. Heterodimer, composed of an alpha and a beta subunit derived from a single precursor. Post-translationally, leu-264 is missing in a major portion of the beta subunit, suggesting an origin by sequential removal of amino acids rather than a processing by endoproteolytic cleavage.

Metalloglycoprotein, containing Ca, Mg, Mn, and Zn and the carbohydrates galactose, glucosamine, mannose, and fucose. It agglutinates erythrocytes of blood group A1. In Vigna unguiculata subsp. cylindrica (Horse gram), this protein is Lectin DB58.